A 431-amino-acid polypeptide reads, in one-letter code: Cleavage stimulation factor subunit 1 (431 aa).

Residues 14–35 are hydrophobic; it reads LYKLIISQLLYDGYISIANGLI. WD repeat units follow at residues 106–145, 171–210, 215–254, 260–301, 303–343, and 395–430; these read SHKGPCRVATYSRDGQLIATGSADASIKILDTERMLAKSA, DHVDEVTCLAFHPTEQILASGSRDYTLKLFDYSKPSAKRA, QEAEMLRSISFHPSGDFILVGTQHPTLRLYDINTFQCFVS, QHTD…TTFE, AHDG…TLVR, and GHNNIVRCIVHSPTNPGFMTCSDDFRARFWYRRSTT.

Homodimer. The CSTF complex is composed of CSTF1 (50 kDa subunit), CSTF2 (64 kDa subunit) and CSTF3 (77 kDa subunit). Interacts (via repeats WD) directly with CSTF3. Interacts (via repeat WD6) with BARD1. Interacts with ERCC6. The N-terminus is blocked.

It localises to the nucleus. Functionally, one of the multiple factors required for polyadenylation and 3'-end cleavage of mammalian pre-mRNAs. May be responsible for the interaction of CSTF with other factors to form a stable complex on the pre-mRNA. The sequence is that of Cleavage stimulation factor subunit 1 (CSTF1) from Homo sapiens (Human).